A 155-amino-acid polypeptide reads, in one-letter code: MNSVFRSTARCLRSATWQYKTAHKNGELSVGRARLMCSSAGQKNLEEMVKKDKVVVFMKGTPAQPMCGFSNAVVQILRMHGVDNYASYNVLDDQDVRQGIKTFSNWPTIPQVFFNGEFVGGCDILLQMHQSGDLVEELQKLGIRSALLDQEKESK.

The transit peptide at 1–14 (MNSVFRSTARCLRS) directs the protein to the mitochondrion. The region spanning 42–145 (QKNLEEMVKK…EELQKLGIRS (104 aa)) is the Glutaredoxin domain. Lysine 59 contacts glutathione. Cysteine 67 contacts [2Fe-2S] cluster. Residues 97 to 101 (RQGIK), isoleucine 109, and 122 to 123 (CD) each bind glutathione.

In terms of assembly, homodimer.

It localises to the mitochondrion. In terms of biological role, monothiol glutaredoxin involved in mitochondrial iron-sulfur (Fe/S) cluster transfer. Receives iron-sulfur clusters from scaffold protein ISCU and mediates their transfer to apoproteins, to the 4Fe/FS cluster biosynthesis machinery, or export from mitochondrion. Required for normal hemoglobin biosynthesis. This is Glutaredoxin-related protein 5, mitochondrial (glrx5) from Danio rerio (Zebrafish).